A 624-amino-acid chain; its full sequence is Fibronectin type III domain-containing protein 2 (624 aa).

The N-terminal stretch at 1–19 is a signal peptide; it reads MREQFSVLVISLLFSSSYG. 5 consecutive Fibronectin type-III domains span residues 131-236, 240-330, 334-430, 431-524, and 527-624; these read PPQN…TPDI, EPTN…TDVF, MPRF…TVPT, VPRE…PKRD, and VPPN…WPGR.

In terms of tissue distribution, prismatic layer of shell (at protein level).

Its subcellular location is the secreted. This is Fibronectin type III domain-containing protein 2 from Margaritifera margaritifera (Freshwater pearl mussel).